The following is a 179-amino-acid chain: DELTA-actitoxin-Afr1e (179 aa).

Residues 1–29 (SADVAGAVIDGAGLGFDVLKTVLEALGNV) are N-terminal alpha-helix that contributes to the pore. An N-terminal region region spans residues 11–30 (GAGLGFDVLKTVLEALGNVK). R31 contacts an N-(acyl)-sphingosylphosphocholine. N-acetyl-D-glucosamine 6-sulfate contacts are provided by Y51 and R53. 13 residues coordinate an N-(acyl)-sphingosylphosphocholine: R53, S54, R79, G85, Y108, Y113, S114, W116, Y133, Y137, Y138, R144, and G168. A trp-rich region, which is important for the binding to lipid membrane region spans residues 105–120 (SVPYDYNWYSNWWNVR). Y138 provides a ligand contact to N-acetyl-D-glucosamine 6-sulfate. Residues 144–146 (RGD) carry the Cell attachment site, crucial for protein stability motif.

The protein belongs to the actinoporin family. Sea anemone subfamily. In terms of assembly, octamer or nonamer in membranes. Monomer in the soluble state.

It is found in the secreted. It localises to the nematocyst. Its subcellular location is the target cell membrane. Functionally, pore-forming toxin (PFT) that consists of a crown-shaped octamer or nonamer that forms cation-selective hydrophilic pores of about 1.5 nm (inside) and 13 nm (outside) and causes cytolysis. It causes cardiac stimulation. Also causes hemolysis (HC(50)=1.6 nM). Interestingly, the Phe-16 is crucial for hemolysis. Pore formation is a multi-step process that involves specific recognition of membrane sphingomyelin (but neither cholesterol nor phosphatidylcholine) using aromatic rich region and adjacent phosphocholine (POC) binding site, firm binding to the membrane (mainly driven by hydrophobic interactions) accompanied by the transfer of the N-terminal region to the lipid-water interface and finally pore formation after oligomerization of monomers. It is probable that a dimeric form is an assembly intermediate before the complete oligomerization. The formation of stable pores occurs only in vesicles composed of DOPC/SM (there is no oligomerization when the PFT is treated with vesicles of DOPC or SM alone). The transmembrane pore displays 8 lateral perforations, one at each subunit-subunit interface, partially occupied by the acyl-chain region of a bridging lipid. Each pore contains 24 lipid molecules, firmly bound to each subunit, that is, 3 lipids (L1, L2, L3, L4 and/or L5) are associated to each subunit. Lipid L1 bridges 2 subunits, whereas lipids L2 and L3 bind to sites at single subunit. In Actinia fragacea (Strawberry anemone), this protein is DELTA-actitoxin-Afr1e.